A 765-amino-acid polypeptide reads, in one-letter code: MTQKTTLVLLALAVITIFALVCVLLAGRSGDGGGLSQPLHCPSVLPSVQPRTHPSQSQPFADLSPEELTAVMSFLTKHLGPGLVDAAQARPSDNCVFSVELQLPAKAAALAHLDRGGPPPVREALAIIFFGGQPKPNVSELVVGPLPHPSYMRDVTVERHGGPLPYYRRPVLDREYQDIEEMIFHRELPQASGLLHHCCFYKHQGQNLLTMTTAPRGLQSGDRATWFGLYYNLSGAGFYPHPIGLELLIDHKALDPALWTIQKVFYQGRYYESLTQLEDQFEAGLVNVVLVPNNGTGGSWSLKSSVPPGPAPPLQFHPQGPRFSVQGSQVSSSLWAFSFGLGAFSGPRIFDIRFQGERVAYEISVQEAIALYGGNSPASMSTCYVDGSFGIGKYSTPLIRGVDCPYLATYVDWHFLLESQAPKTLRDAFCVFEQNQGLPLRRHHSDFYSHYFGGVVGTVLVVRSVSTLLNYDYIWDMVFHPNGAIEVKFHATGYISSAFFFGAGEKFGNRVGAHTLGTVHTHSAHFKVDLDVAGLKNWAWAEDMAFVPTIVPWQPEYQMQRLQVTRKLLETEEEAAFPLGGATPRYLYLASNHSNKWGHRRGYRIQILSFAGKPLPQESPIEKAFTWGRYHLAVTQRKEEEPSSSSIFNQNDPWTPTVNFTDFISNETIAGEDLVAWVTAGFLHIPHAEDIPNTVTAGNSVGFFLRPYNFFDEDPSFHSADSIYFREGQDATACEVNPLACLSQTATCAPEIPAFSHGGFAYRDN.

Residues 1–6 lie on the Cytoplasmic side of the membrane; the sequence is MTQKTT. The helical; Signal-anchor for type II membrane protein transmembrane segment at 7-27 threads the bilayer; sequence LVLLALAVITIFALVCVLLAG. The Extracellular portion of the chain corresponds to 28–765; the sequence is RSGDGGGLSQ…SHGGFAYRDN (738 aa). N-linked (GlcNAc...) asparagine glycosylation is present at Asn-137. Cys-198 and Cys-199 form a disulfide bridge. N-linked (GlcNAc...) asparagine glycans are attached at residues Asn-232 and Asn-294. Asp-386 functions as the Proton acceptor in the catalytic mechanism. Residues Cys-404 and Cys-430 are joined by a disulfide bond. Tyr-471 functions as the Schiff-base intermediate with substrate; via topaquinone in the catalytic mechanism. Tyr-471 carries the post-translational modification 2',4',5'-topaquinone. Cu(2+)-binding residues include His-520 and His-522. The Ca(2+) site is built by Asp-529, Leu-530, Asp-531, and Glu-572. N-linked (GlcNAc...) asparagine glycosylation occurs at Asn-592. Glu-641 contacts Ca(2+). An N-linked (GlcNAc...) asparagine glycan is attached at Asn-659. Residue Phe-663 participates in Ca(2+) binding. A glycan (N-linked (GlcNAc...) asparagine) is linked at Asn-666. Glu-667, Asp-673, and Leu-674 together coordinate Ca(2+). His-684 lines the Cu(2+) pocket. Cys-734 and Cys-741 form a disulfide bridge.

Belongs to the copper/topaquinone oxidase family. As to quaternary structure, homodimer; disulfide-linked. Probably forms heterodimers with AOC2. Cu(2+) serves as cofactor. The cofactor is Ca(2+). L-topaquinone is required as a cofactor. Topaquinone (TPQ) is generated by copper-dependent autoxidation of a specific tyrosyl residue. Post-translationally, N- and O-glycosylated.

It localises to the cell membrane. It carries out the reaction methylamine + O2 + H2O = formaldehyde + H2O2 + NH4(+). The enzyme catalyses benzylamine + O2 + H2O = benzaldehyde + H2O2 + NH4(+). The catalysed reaction is 2-phenylethylamine + O2 + H2O = 2-phenylacetaldehyde + H2O2 + NH4(+). In terms of biological role, catalyzes the oxidative deamination of primary amines to the corresponding aldehydes with the concomitant production of hydrogen peroxide and ammonia. Has a preference for the primary monoamines methylamine and benzylamine. Could also act on 2-phenylethylamine but much less efficiently. At endothelial cells surface can also function as a cell adhesion protein that participates in lymphocyte extravasation and recirculation by mediating the binding of lymphocytes to peripheral lymph node vascular endothelial cells in an L-selectin-independent fashion. The chain is Amine oxidase [copper-containing] 3 from Mus musculus (Mouse).